A 514-amino-acid chain; its full sequence is Importin subunit alpha-3 (514 aa).

Residues Met-1 to Asp-51 enclose the IBB domain. The interval Met-1–Phe-62 is disordered. Positions Asn-12–Ser-39 are enriched in basic and acidic residues. ARM repeat units lie at residues Ile-101–Gln-142, Thr-143–Tyr-187, Cys-188–Pro-226, Ala-227–Gln-271, Met-272–Gln-311, Thr-312–Gln-353, Val-354–Arg-393, and Pro-394–Gly-436. Residues Gly-485–Lys-514 are disordered.

This sequence belongs to the importin alpha family. In terms of assembly, forms a complex with an importin beta subunit. May interact with transcription factor cebp-1 (via N-terminus). Interacts with cmk-1; affinity for cmk-1 is increased in the presence of Ca(2+) and calmodulin and leads to increased nuclear accumulation of cmk-1 in FLP neurons upon prolonged heat activation. As to expression, expressed in larval and adult germline and somatic tissues, including neurons.

It localises to the cytoplasm. It is found in the nucleus. Binds specifically and directly to substrates containing either a simple or bipartite NLS motif. Promotes docking of import substrates to the nuclear envelope. Seems to act as a cytosolic receptor for both simple and bipartite NLS motifs. Necessary for correct nucleoporin localization within the germline. Essential gene for embryonic and larval development. May be dispensable for axon development, but required for axon regeneration in both mechanosensory and motor neurons. Required for oogenic development, ima-1 and ima-2 cannot functionally compensate for loss of ima-3. This chain is Importin subunit alpha-3 (ima-3), found in Caenorhabditis elegans.